The primary structure comprises 254 residues: 3-deoxy-manno-octulosonate cytidylyltransferase (254 aa).

The protein belongs to the KdsB family.

It localises to the cytoplasm. The enzyme catalyses 3-deoxy-alpha-D-manno-oct-2-ulosonate + CTP = CMP-3-deoxy-beta-D-manno-octulosonate + diphosphate. It functions in the pathway nucleotide-sugar biosynthesis; CMP-3-deoxy-D-manno-octulosonate biosynthesis; CMP-3-deoxy-D-manno-octulosonate from 3-deoxy-D-manno-octulosonate and CTP: step 1/1. Activates KDO (a required 8-carbon sugar) for incorporation into bacterial lipopolysaccharide in Gram-negative bacteria. The protein is 3-deoxy-manno-octulosonate cytidylyltransferase of Lawsonia intracellularis (strain PHE/MN1-00).